A 97-amino-acid polypeptide reads, in one-letter code: Acylphosphatase-2 (97 aa).

Ala-2 carries the post-translational modification N-acetylalanine. In terms of domain architecture, Acylphosphatase-like spans Ser-7–Tyr-97. Residues Arg-22 and Asn-40 contribute to the active site. The residue at position 91 (Ser-91) is a Phosphoserine.

It belongs to the acylphosphatase family.

The enzyme catalyses an acyl phosphate + H2O = a carboxylate + phosphate + H(+). Its function is as follows. Its physiological role is not yet clear. This Rattus norvegicus (Rat) protein is Acylphosphatase-2 (Acyp2).